We begin with the raw amino-acid sequence, 130 residues long: Small ribosomal subunit protein uS9 (130 aa).

A disordered region spans residues leucine 104 to arginine 130. The span at lysine 111 to arginine 130 shows a compositional bias: basic residues.

The protein belongs to the universal ribosomal protein uS9 family.

The sequence is that of Small ribosomal subunit protein uS9 from Ruminiclostridium cellulolyticum (strain ATCC 35319 / DSM 5812 / JCM 6584 / H10) (Clostridium cellulolyticum).